A 706-amino-acid chain; its full sequence is Envelope glycoprotein H (706 aa).

An N-terminal signal peptide occupies residues 1–18 (MQLLCVFCLVLLWEVGAA). Over 19 to 682 (SLSEVKLHLD…LYEERAHVVL (664 aa)) the chain is Virion surface. N-linked (GlcNAc...) asparagine; by host glycosylation is present at Asn-60. Positions 165-229 (DKFQYTGAMT…QSGDYSLVIV (65 aa)) are interaction with gL. An intrachain disulfide couples Cys-278 to Cys-335. Residue Asn-435 is glycosylated (N-linked (GlcNAc...) asparagine; by host). 2 cysteine pairs are disulfide-bonded: Cys-454/Cys-478 and Cys-534/Cys-587. N-linked (GlcNAc...) asparagine; by host glycans are attached at residues Asn-549 and Asn-604. A disulfide bond links Cys-612 and Cys-615. Residue Asn-664 is glycosylated (N-linked (GlcNAc...) asparagine; by host). A helical membrane pass occupies residues 683-703 (AIILYFIAFALGIFLVHKIVM). Topologically, residues 704-706 (FFL) are intravirion.

This sequence belongs to the herpesviridae glycoprotein H family. In terms of assembly, interacts with glycoprotein L (gL); this interaction is necessary for the correct processing and cell surface expression of gH. The heterodimer gH/gL seems to interact with gB trimers during fusion. The heterodimer gH/gL interacts with host EPHA2 to facilitate virus internalization and fusion. Interacts with glycoprotein 42/BZLF2. Post-translationally, N-glycosylated, O-glycosylated, and sialylated.

The protein localises to the virion membrane. It localises to the host cell membrane. The protein resides in the host endosome membrane. Functionally, the heterodimer glycoprotein H-glycoprotein L is required for the fusion of viral and plasma membranes leading to virus entry into the host cell. Following initial binding to host receptor, membrane fusion is mediated by the fusion machinery composed of gB and the heterodimer gH/gL. May also be involved in the fusion between the virion envelope and the outer nuclear membrane during virion morphogenesis. The heterodimer gH/gL targets also host EPHA2 to promote viral entry. This is Envelope glycoprotein H from Homo sapiens (Human).